The chain runs to 625 residues: MTIRRLPPVLIDRIAAGEVVERPAAAVKELVENAIDAGATEIEVLVVGGGREMIRISDNGSGMSADELSLAVERHATSKLPTEDLLAISTLGFRGEALPSIGAVARLSIASRPKSAPHAFEIRVEGGVVTPPRPAALNGGTRVEVRDLFFATPARLKFLKSDRAEAAAAADVVRRLALARPDVAFTLMTDDRQPLTWVARSMDEAGRAARVADVLGAEAGRNLIPVVGERGGVRLVGLAGLPTYSKANSLSQFLFVNGRPVRDKLLMGALRAAYSDLLPSDRYPVLALFLSLDPREVDVNVHPAKTEVRFRDGGNVRALLVRTLTDALAARVPSTAGTIADRLVELARTPELEPARPAAAIPEFRPYRAEPMPAGGYDWRASPARPLNVAEPDGALEAEMESFAEAVQASFDVGMPAADARADAAVPETGDLDRPLGAARAQLHETYIVAQTREGMVLVDQHAAHERLVYEKLKAALERDGVARQGLLVPAVVDLDPAEADRLAERAGDLAALGLVIEPFGIGAVLVREVPALLAKADVTKLVRDVAEHSAEWDDALPLERRLLHVAATMACHGSVRAGRRLRVEEMNALLREMEETPNAGECNHGRPTFITLSLKDVEKLFARR.

It belongs to the DNA mismatch repair MutL/HexB family.

Its function is as follows. This protein is involved in the repair of mismatches in DNA. It is required for dam-dependent methyl-directed DNA mismatch repair. May act as a 'molecular matchmaker', a protein that promotes the formation of a stable complex between two or more DNA-binding proteins in an ATP-dependent manner without itself being part of a final effector complex. The polypeptide is DNA mismatch repair protein MutL (Azorhizobium caulinodans (strain ATCC 43989 / DSM 5975 / JCM 20966 / LMG 6465 / NBRC 14845 / NCIMB 13405 / ORS 571)).